The chain runs to 37 residues: Large ribosomal subunit protein bL36 (37 aa).

This sequence belongs to the bacterial ribosomal protein bL36 family.

In Marinobacter nauticus (strain ATCC 700491 / DSM 11845 / VT8) (Marinobacter aquaeolei), this protein is Large ribosomal subunit protein bL36.